A 104-amino-acid polypeptide reads, in one-letter code: MKSLLTFILTTIFCIQQVWAADLAHGEQIFSANCAACHAGGNNVIMPEKTLKLDALEANQMNSVEAISTQVRNGKNAMPSFSRLTDSDIEDVANYVLAQAKKGW.

Residues 1-20 form the signal peptide; sequence MKSLLTFILTTIFCIQQVWA. The heme c site is built by Cys34, Cys37, His38, and Met78.

This sequence belongs to the cytochrome c family. PetJ subfamily. In terms of assembly, monomer. Binds 1 heme c group covalently per subunit.

Its subcellular location is the plastid. It is found in the chloroplast thylakoid lumen. Functionally, functions as an electron carrier between membrane-bound cytochrome b6-f and photosystem I in oxygenic photosynthesis. The polypeptide is Cytochrome c6 (Cyanidioschyzon merolae (strain NIES-3377 / 10D) (Unicellular red alga)).